Reading from the N-terminus, the 365-residue chain is Bifunctional chorismate mutase/prephenate dehydratase (365 aa).

Residues 1–96 (MSEADQLKAL…SCLALEQPLR (96 aa)) enclose the Chorismate mutase domain. Substrate-binding residues include arginine 11, arginine 28, lysine 39, and glutamate 57. Residues 97–272 (VAYLGPEGTF…NSTRFLIIGS (176 aa)) form the Prephenate dehydratase domain. The ACT domain occupies 284-361 (SIIVSMRNKP…VALKVLGSYP (78 aa)).

The protein resides in the cytoplasm. The catalysed reaction is chorismate = prephenate. The enzyme catalyses prephenate + H(+) = 3-phenylpyruvate + CO2 + H2O. It participates in amino-acid biosynthesis; L-phenylalanine biosynthesis; phenylpyruvate from prephenate: step 1/1. It functions in the pathway metabolic intermediate biosynthesis; prephenate biosynthesis; prephenate from chorismate: step 1/1. In terms of biological role, catalyzes the Claisen rearrangement of chorismate to prephenate and the decarboxylation/dehydration of prephenate to phenylpyruvate. The protein is Bifunctional chorismate mutase/prephenate dehydratase of Stutzerimonas stutzeri (Pseudomonas stutzeri).